Reading from the N-terminus, the 177-residue chain is Large ribosomal subunit protein uL6 (177 aa).

Belongs to the universal ribosomal protein uL6 family. In terms of assembly, part of the 50S ribosomal subunit.

This protein binds to the 23S rRNA, and is important in its secondary structure. It is located near the subunit interface in the base of the L7/L12 stalk, and near the tRNA binding site of the peptidyltransferase center. This chain is Large ribosomal subunit protein uL6, found in Variovorax paradoxus (strain S110).